Consider the following 290-residue polypeptide: UPF0761 membrane protein YihY (290 aa).

6 consecutive transmembrane segments (helical) span residues 44-64 (LLSL…FPMF), 104-124 (VGAC…DSAL), 140-160 (FAVY…SLAI), 183-203 (IFPL…VPTI), 210-230 (AIVG…GFAL), and 244-264 (VLAV…IVLL).

This sequence belongs to the UPF0761 family.

It localises to the cell inner membrane. The chain is UPF0761 membrane protein YihY from Escherichia coli O1:K1 / APEC.